Consider the following 473-residue polypeptide: Phosphatidylserine synthase 1 (473 aa).

Position 2 is an N-acetylalanine (Ala-2). At 2-35 the chain is on the cytoplasmic side; it reads ASCVGSRTLSKDDVNYRMHFRMINEQQVEDITID. The chain crosses the membrane as a helical span at residues 36-56; the sequence is FFYRPHTITLLSFTIISLMYF. Residues 57–72 lie on the Lumenal side of the membrane; that stretch reads AFTRDDCVPEDNIWRG. A helical membrane pass occupies residues 73–93; sequence ILSVIFFFLIISVLAFPNGPF. The Cytoplasmic segment spans residues 94–102; it reads TRPHPALWR. Residues 103–123 traverse the membrane as a helical segment; the sequence is MVFGLSVLYFLFLVFLLFLNF. Residues 124-186 lie on the Lumenal side of the membrane; the sequence is EQVKSLMYWL…AMKALLIRSY (63 aa). A helical transmembrane segment spans residues 187–207; the sequence is GLCWTISITWELTELFFMHLL. Residues 208–216 are Cytoplasmic-facing; sequence PNFAECWWD. The chain crosses the membrane as a helical span at residues 217–237; the sequence is QVILDILLCNGGGIWLGMVVC. Over 238-286 the chain is Lumenal; it reads RFLEMRTYHWASFKDIHTTTGKIKRAVLQFTPASWTYVRWFDPKSSFQR. The chain crosses the membrane as a helical span at residues 287–307; that stretch reads VAGIYLFMIIWQLTELNTFFL. At 308-319 the chain is on the cytoplasmic side; that stretch reads KHIFVFQASHPL. Residues 320–342 traverse the membrane as a helical segment; sequence SWCRILFIGCITAPTVRQYYAYL. The Lumenal portion of the chain corresponds to 343 to 355; sequence TDTQCKRVGTQCW. The chain crosses the membrane as a helical span at residues 356-376; it reads VFGVIGFLEAIVCIKFGQDLF. At 377–383 the chain is on the cytoplasmic side; that stretch reads SKTQILY. Residues 384–404 form a helical membrane-spanning segment; the sequence is VVLWLLCVAFTTFLCLYGMVW. The Lumenal segment spans residues 405 to 473; that stretch reads YAEHYGHREK…SKVTNGVGKK (69 aa). A phosphoserine mark is found at Ser-417, Ser-425, Ser-442, and Ser-454. Residues 430–473 form a disordered region; that stretch reads WYHGKGSKGSEDSPPKHSNNNESHSSRRRNRHSKSKVTNGVGKK. Residues 455–464 are compositionally biased toward basic residues; that stretch reads SRRRNRHSKS.

This sequence belongs to the phosphatidyl serine synthase family.

The protein localises to the endoplasmic reticulum membrane. The enzyme catalyses a 1,2-diacyl-sn-glycero-3-phosphoethanolamine + L-serine = a 1,2-diacyl-sn-glycero-3-phospho-L-serine + ethanolamine. The catalysed reaction is a 1,2-diacyl-sn-glycero-3-phosphocholine + L-serine = a 1,2-diacyl-sn-glycero-3-phospho-L-serine + choline. The protein operates within phospholipid metabolism; phosphatidylserine biosynthesis. Catalyzes a base-exchange reaction in which the polar head group of phosphatidylethanolamine (PE) or phosphatidylcholine (PC) is replaced by L-serine. Catalyzes mainly the conversion of phosphatidylcholine but also converts, in vitro and to a lesser extent, phosphatidylethanolamine. The sequence is that of Phosphatidylserine synthase 1 (Ptdss1) from Rattus norvegicus (Rat).